The chain runs to 311 residues: tRNA dimethylallyltransferase (311 aa).

ATP is bound at residue 11-18 (GPTASGKS). A substrate-binding site is contributed by 13–18 (TASGKS). Interaction with substrate tRNA regions lie at residues 36 to 39 (DSMQ) and 160 to 164 (QRLIR).

The protein belongs to the IPP transferase family. Monomer. Mg(2+) serves as cofactor.

It carries out the reaction adenosine(37) in tRNA + dimethylallyl diphosphate = N(6)-dimethylallyladenosine(37) in tRNA + diphosphate. In terms of biological role, catalyzes the transfer of a dimethylallyl group onto the adenine at position 37 in tRNAs that read codons beginning with uridine, leading to the formation of N6-(dimethylallyl)adenosine (i(6)A). The protein is tRNA dimethylallyltransferase of Rickettsia typhi (strain ATCC VR-144 / Wilmington).